The chain runs to 430 residues: Enolase (430 aa).

A (2R)-2-phosphoglycerate-binding site is contributed by Gln167. The active-site Proton donor is Glu209. 3 residues coordinate Mg(2+): Asp245, Glu286, and Asp313. (2R)-2-phosphoglycerate contacts are provided by Lys338, Arg367, Ser368, and Lys389. Lys338 functions as the Proton acceptor in the catalytic mechanism.

This sequence belongs to the enolase family. Mg(2+) serves as cofactor.

It is found in the cytoplasm. It localises to the secreted. The protein resides in the cell surface. It carries out the reaction (2R)-2-phosphoglycerate = phosphoenolpyruvate + H2O. The protein operates within carbohydrate degradation; glycolysis; pyruvate from D-glyceraldehyde 3-phosphate: step 4/5. Functionally, catalyzes the reversible conversion of 2-phosphoglycerate (2-PG) into phosphoenolpyruvate (PEP). It is essential for the degradation of carbohydrates via glycolysis. In Synechococcus sp. (strain CC9902), this protein is Enolase.